The chain runs to 205 residues: Urease accessory protein UreG (205 aa).

10 to 17 (GPVGAGKT) provides a ligand contact to GTP.

It belongs to the SIMIBI class G3E GTPase family. UreG subfamily. As to quaternary structure, homodimer. UreD, UreF and UreG form a complex that acts as a GTP-hydrolysis-dependent molecular chaperone, activating the urease apoprotein by helping to assemble the nickel containing metallocenter of UreC. The UreE protein probably delivers the nickel.

The protein resides in the cytoplasm. In terms of biological role, facilitates the functional incorporation of the urease nickel metallocenter. This process requires GTP hydrolysis, probably effectuated by UreG. The polypeptide is Urease accessory protein UreG (Corynebacterium glutamicum (strain R)).